The chain runs to 277 residues: Large ribosomal subunit protein uL2 (277 aa).

2 disordered regions span residues 36–55 (PLPK…RHHG) and 213–277 (WKGI…RKKK).

Belongs to the universal ribosomal protein uL2 family. In terms of assembly, part of the 50S ribosomal subunit. Forms a bridge to the 30S subunit in the 70S ribosome.

One of the primary rRNA binding proteins. Required for association of the 30S and 50S subunits to form the 70S ribosome, for tRNA binding and peptide bond formation. It has been suggested to have peptidyltransferase activity; this is somewhat controversial. Makes several contacts with the 16S rRNA in the 70S ribosome. This Staphylococcus saprophyticus subsp. saprophyticus (strain ATCC 15305 / DSM 20229 / NCIMB 8711 / NCTC 7292 / S-41) protein is Large ribosomal subunit protein uL2.